The chain runs to 377 residues: MAKSHLLQWLLLLPTLCCPGAAITSASSLECAQGPQFWCQSLEHAVQCRALGHCLQEVWGHAGANDLCQECEDIVHLLTKMTKEDAFQEAIRKFLEQECDILPLKLLVPRCRQVLDVYLPLVIDYFQSQINPKAICNHVGLCPRGQAKPEQNPGMPDAVPNPLLDKLVLPVLPGALLARPGPHTQDFSEQQLPIPLPFCWLCRTLIKRVQAVIPKGVLAVAVSQVCHVVPLVVGGICQCLAERYTVLLLDALLGRVVPQLVCGLVLRCSTEDAMGPALPAVEPLIEEWPLQDTECHFCKSVINQAWNTSEQAMPQAMHQACLRFWLDRQKCEQFVEQHMPQLLALVPRSQDAHITCQALGVCEAPASPLQCFQTPHL.

An N-terminal signal peptide occupies residues 1–22 (MAKSHLLQWLLLLPTLCCPGAA). Residues 23-191 (ITSASSLECA…PHTQDFSEQQ (169 aa)) constitute a propeptide that is removed on maturation. Residues 24–64 (TSASSLECAQGPQFWCQSLEHAVQCRALGHCLQEVWGHAGA) enclose the Saposin A-type domain. Saposin B-type domains are found at residues 64 to 146 (ANDL…PRGQ), 195 to 272 (PLPF…STED), and 291 to 366 (QDTE…EAPA). Cystine bridges form between cysteine 68/cysteine 142, cysteine 71/cysteine 136, cysteine 99/cysteine 111, cysteine 199/cysteine 268, cysteine 202/cysteine 262, cysteine 226/cysteine 237, cysteine 295/cysteine 362, cysteine 298/cysteine 356, and cysteine 321/cysteine 331. A propeptide spanning residues 271 to 377 (EDAMGPALPA…PLQCFQTPHL (107 aa)) is cleaved from the precursor. Asparagine 307 is a glycosylation site (N-linked (GlcNAc...) asparagine).

Homodimer; disulfide-linked.

The protein resides in the secreted. Its subcellular location is the extracellular space. The protein localises to the surface film. In terms of biological role, pulmonary surfactant-associated proteins promote alveolar stability by lowering the surface tension at the air-liquid interface in the peripheral air spaces. SP-B increases the collapse pressure of palmitic acid to nearly 70 millinewtons per meter. The polypeptide is Pulmonary surfactant-associated protein B (Sftpb) (Mus musculus (Mouse)).